We begin with the raw amino-acid sequence, 337 residues long: Arylacetonitrilase (337 aa).

Positions 7 to 278 (VRVAVTQHEP…EGFVYADLDL (272 aa)) constitute a CN hydrolase domain. Glu-47 serves as the catalytic Proton acceptor. Lys-127 is an active-site residue. The active-site Nucleophile is the Cys-162. Residues 311-337 (QHRPEGQADNAAYGLDVPSGLVEEEGA) form a disordered region.

The protein belongs to the carbon-nitrogen hydrolase superfamily. Nitrilase family.

The enzyme catalyses a nitrile + 2 H2O = a carboxylate + NH4(+). It catalyses the reaction 4-chlorophenylacetonitrile + 2 H2O = 4-chlorophenylacetate + NH4(+). In terms of biological role, nitrilase that hydrolyzes preferentially phenylacetonitrile, but also (R,S)-mandelonitrile, and 2-phenylpropionitrile. The chain is Arylacetonitrilase from Aspergillus niger (strain ATCC MYA-4892 / CBS 513.88 / FGSC A1513).